Consider the following 157-residue polypeptide: Snaclec A16 (157 aa).

A signal peptide spans Met-1–Ala-23. Intrachain disulfides connect Cys-27-Cys-38, Cys-55-Cys-149, and Cys-124-Cys-141. In terms of domain architecture, C-type lectin spans Tyr-34–Met-150.

The protein belongs to the snaclec family. Heterodimer; disulfide-linked. Expressed by the venom gland.

The protein localises to the secreted. Functionally, interferes with one step of hemostasis (modulation of platelet aggregation, or coagulation cascade, for example). This chain is Snaclec A16, found in Macrovipera lebetinus (Levantine viper).